The primary structure comprises 562 residues: Arginine--tRNA ligase 1 (562 aa).

Positions 122–132 match the 'HIGH' region motif; that stretch reads PNIAKPFSMGH.

Belongs to the class-I aminoacyl-tRNA synthetase family. As to quaternary structure, monomer.

It is found in the cytoplasm. The enzyme catalyses tRNA(Arg) + L-arginine + ATP = L-arginyl-tRNA(Arg) + AMP + diphosphate. This chain is Arginine--tRNA ligase 1, found in Bacillus cereus (strain ZK / E33L).